We begin with the raw amino-acid sequence, 435 residues long: Indole diterpene prenyltransferase atmD (435 aa).

L-tryptophan-binding positions include 81–82 and glutamate 90; that span reads AY. The substrate site is built by arginine 103, lysine 190, arginine 261, lysine 263, tyrosine 265, tyrosine 346, and tyrosine 413.

This sequence belongs to the tryptophan dimethylallyltransferase family.

Indole diterpene prenyltransferase; part of the ATM2 gene cluster that mediates the biosynthesis of aflatrem, a tremorgenic mycotoxin with acute neurotoxic effects. Synthesis of geranylgeranyl diphosphate (GGPP) by AtmG (a GGPP synthase) precedes condensation of GGPP with indole 3-glycerol phosphate, followed by epoxidation and cyclization by AtmM (a FAD-dependent monooxygenase) and AtmC (a prenyltransferase) to produce paspaline. AtmB is also essential for paspaline production, but its exact role has not been identified yet. AtmP, a cytochrome P450 monooxygenase, subsequently converts paspaline to 13-desoxypaxilline via PC-M6 by removal of the C-30 methyl group and oxidation at C-10. AtmQ, a cytochrome P450 monooxygenase, then catalyzes the oxidation of 13-desoxypaxilline, first at C-7 to produce paspalicine and then at C-13 to form paspalinine. Finally, AtmD prenylates paspalinine to form aflatrem. This is Indole diterpene prenyltransferase atmD from Aspergillus flavus.